The sequence spans 293 residues: 4-hydroxy-tetrahydrodipicolinate synthase (293 aa).

Threonine 44 lines the pyruvate pocket. Tyrosine 132 acts as the Proton donor/acceptor in catalysis. Catalysis depends on lysine 160, which acts as the Schiff-base intermediate with substrate. Isoleucine 204 lines the pyruvate pocket.

Belongs to the DapA family. In terms of assembly, homotetramer; dimer of dimers.

The protein resides in the cytoplasm. It carries out the reaction L-aspartate 4-semialdehyde + pyruvate = (2S,4S)-4-hydroxy-2,3,4,5-tetrahydrodipicolinate + H2O + H(+). The protein operates within amino-acid biosynthesis; L-lysine biosynthesis via DAP pathway; (S)-tetrahydrodipicolinate from L-aspartate: step 3/4. Catalyzes the condensation of (S)-aspartate-beta-semialdehyde [(S)-ASA] and pyruvate to 4-hydroxy-tetrahydrodipicolinate (HTPA). The protein is 4-hydroxy-tetrahydrodipicolinate synthase of Hyphomonas neptunium (strain ATCC 15444).